Here is a 248-residue protein sequence, read N- to C-terminus: Membrane-spanning 4-domains subfamily A member 6A (248 aa).

Residues 1 to 46 lie on the Cytoplasmic side of the membrane; the sequence is MTSQPVPNETIIVLPSNVINFSQAEKPEPTNQGQDSLKKHLHAEIK. Residues 47–67 traverse the membrane as a helical segment; it reads VIGTIQILCGMMVLSLGIILA. Residues 68-84 are Extracellular-facing; that stretch reads SASFSPNFTQVTSTLLN. The helical transmembrane segment at 85–105 threads the bilayer; the sequence is SAYPFIGPFFFIISGSLSIAT. The Cytoplasmic portion of the chain corresponds to 106–116; sequence EKRLTKLLVHS. A helical transmembrane segment spans residues 117-137; sequence SLVGSILSALSALVGFIILSV. Topologically, residues 138-185 are extracellular; that stretch reads KQATLNPASLQCELDKNNIPTRSYVSYFYHDSLYTTDCYTAKASLAGT. A helical membrane pass occupies residues 186-206; that stretch reads LSLMLICTLLEFCLAVLTAVL. Residues 207–248 are Cytoplasmic-facing; the sequence is RWKQAYSDFPGSVLFLPHSYIGNSGMSSKMTHDCGYEELLTS.

It belongs to the MS4A family. Variable expression in some B-cell, myelomonocytic, and erythroleukemia cell lines.

It localises to the membrane. Its function is as follows. May be involved in signal transduction as a component of a multimeric receptor complex. The sequence is that of Membrane-spanning 4-domains subfamily A member 6A (MS4A6A) from Homo sapiens (Human).